Here is a 211-residue protein sequence, read N- to C-terminus: Peptidyl-tRNA hydrolase (211 aa).

Tyrosine 17 lines the tRNA pocket. The active-site Proton acceptor is histidine 22. TRNA is bound by residues phenylalanine 79, asparagine 81, and asparagine 127.

The protein belongs to the PTH family. As to quaternary structure, monomer.

The protein localises to the cytoplasm. The enzyme catalyses an N-acyl-L-alpha-aminoacyl-tRNA + H2O = an N-acyl-L-amino acid + a tRNA + H(+). Its function is as follows. Hydrolyzes ribosome-free peptidyl-tRNAs (with 1 or more amino acids incorporated), which drop off the ribosome during protein synthesis, or as a result of ribosome stalling. In terms of biological role, catalyzes the release of premature peptidyl moieties from peptidyl-tRNA molecules trapped in stalled 50S ribosomal subunits, and thus maintains levels of free tRNAs and 50S ribosomes. The sequence is that of Peptidyl-tRNA hydrolase from Solidesulfovibrio magneticus (strain ATCC 700980 / DSM 13731 / RS-1) (Desulfovibrio magneticus).